The primary structure comprises 437 residues: Trigger factor (437 aa).

One can recognise a PPIase FKBP-type domain in the interval 163-248 (GHMVTIDYAF…LNEIKRKELP (86 aa)).

This sequence belongs to the FKBP-type PPIase family. Tig subfamily.

It is found in the cytoplasm. The enzyme catalyses [protein]-peptidylproline (omega=180) = [protein]-peptidylproline (omega=0). Its function is as follows. Involved in protein export. Acts as a chaperone by maintaining the newly synthesized protein in an open conformation. Functions as a peptidyl-prolyl cis-trans isomerase. This Pelobacter propionicus (strain DSM 2379 / NBRC 103807 / OttBd1) protein is Trigger factor.